Consider the following 120-residue polypeptide: UPF0231 protein YacL (120 aa).

Belongs to the UPF0231 family.

The polypeptide is UPF0231 protein YacL (Salmonella heidelberg (strain SL476)).